Consider the following 468-residue polypeptide: 6-phospho-beta-galactosidase (468 aa).

D-galactose 6-phosphate contacts are provided by Q19, H116, N159, E160, and N297. E160 acts as the Proton donor in catalysis. The active-site Nucleophile is E375. Residues S428, W429, K435, and Y437 each coordinate D-galactose 6-phosphate.

The protein belongs to the glycosyl hydrolase 1 family.

The enzyme catalyses a 6-phospho-beta-D-galactoside + H2O = D-galactose 6-phosphate + an alcohol. It functions in the pathway carbohydrate metabolism; lactose degradation; D-galactose 6-phosphate and beta-D-glucose from lactose 6-phosphate: step 1/1. This is 6-phospho-beta-galactosidase from Lactococcus lactis subsp. lactis (Streptococcus lactis).